The sequence spans 156 residues: Ribosome-binding factor A (156 aa).

Residues 125 to 138 are compositionally biased toward basic and acidic residues; sequence RVREGAKHAGDPDP. Residues 125–156 form a disordered region; that stretch reads RVREGAKHAGDPDPYRVGGAEDTDGDTDGDER. A compositionally biased stretch (acidic residues) spans 145-156; that stretch reads EDTDGDTDGDER.

This sequence belongs to the RbfA family. As to quaternary structure, monomer. Binds 30S ribosomal subunits, but not 50S ribosomal subunits or 70S ribosomes.

The protein resides in the cytoplasm. Functionally, one of several proteins that assist in the late maturation steps of the functional core of the 30S ribosomal subunit. Associates with free 30S ribosomal subunits (but not with 30S subunits that are part of 70S ribosomes or polysomes). Required for efficient processing of 16S rRNA. May interact with the 5'-terminal helix region of 16S rRNA. The chain is Ribosome-binding factor A from Mycolicibacterium smegmatis (strain ATCC 700084 / mc(2)155) (Mycobacterium smegmatis).